Reading from the N-terminus, the 216-residue chain is Phosphatidylserine decarboxylase proenzyme (216 aa).

Catalysis depends on S183, which acts as the Schiff-base intermediate with substrate; via pyruvic acid. At S183 the chain carries Pyruvic acid (Ser); by autocatalysis.

The protein belongs to the phosphatidylserine decarboxylase family. PSD-A subfamily. As to quaternary structure, heterodimer of a large membrane-associated beta subunit and a small pyruvoyl-containing alpha subunit. Pyruvate is required as a cofactor. Is synthesized initially as an inactive proenzyme. Formation of the active enzyme involves a self-maturation process in which the active site pyruvoyl group is generated from an internal serine residue via an autocatalytic post-translational modification. Two non-identical subunits are generated from the proenzyme in this reaction, and the pyruvate is formed at the N-terminus of the alpha chain, which is derived from the carboxyl end of the proenzyme. The post-translation cleavage follows an unusual pathway, termed non-hydrolytic serinolysis, in which the side chain hydroxyl group of the serine supplies its oxygen atom to form the C-terminus of the beta chain, while the remainder of the serine residue undergoes an oxidative deamination to produce ammonia and the pyruvoyl prosthetic group on the alpha chain.

It localises to the cell membrane. The enzyme catalyses a 1,2-diacyl-sn-glycero-3-phospho-L-serine + H(+) = a 1,2-diacyl-sn-glycero-3-phosphoethanolamine + CO2. It functions in the pathway phospholipid metabolism; phosphatidylethanolamine biosynthesis; phosphatidylethanolamine from CDP-diacylglycerol: step 2/2. Catalyzes the formation of phosphatidylethanolamine (PtdEtn) from phosphatidylserine (PtdSer). The polypeptide is Phosphatidylserine decarboxylase proenzyme (Cupriavidus taiwanensis (strain DSM 17343 / BCRC 17206 / CCUG 44338 / CIP 107171 / LMG 19424 / R1) (Ralstonia taiwanensis (strain LMG 19424))).